Consider the following 107-residue polypeptide: UPF0102 protein Tlet_0667 (107 aa).

It belongs to the UPF0102 family.

The polypeptide is UPF0102 protein Tlet_0667 (Pseudothermotoga lettingae (strain ATCC BAA-301 / DSM 14385 / NBRC 107922 / TMO) (Thermotoga lettingae)).